We begin with the raw amino-acid sequence, 77 residues long: MKLMIFTGLVLFAIVSLIEAQAENEKPCLPEYKVCTHVPGNCCSDLVCDCYGRYKSGAQIGRNCFCLQKGVIYKREN.

Residues 1-20 (MKLMIFTGLVLFAIVSLIEA) form the signal peptide. The propeptide occupies 21–26 (QAENEK).

This sequence belongs to the neurotoxin 19 (CSTX) family. 08 (U8-Lctx) subfamily. Contains 4 disulfide bonds. In terms of tissue distribution, expressed by the venom gland.

It is found in the secreted. This is U8-lycotoxin-Ls1p from Lycosa singoriensis (Wolf spider).